Consider the following 44-residue polypeptide: U4-ctenitoxin-Pk1a (44 aa).

5 disulfides stabilise this stretch: cysteine 4–cysteine 18, cysteine 11–cysteine 24, cysteine 15–cysteine 42, cysteine 17–cysteine 33, and cysteine 26–cysteine 31.

Expressed by the venom gland.

It is found in the secreted. Its function is as follows. Neurotoxin. Causes spastic paralysis and death in mice within 10 minutes at dose levels of 3 ug per mouse. The chain is U4-ctenitoxin-Pk1a from Phoneutria keyserlingi (Brazilian wandering spider).